Reading from the N-terminus, the 370-residue chain is Glutathione S-transferase omega-like 2 (370 aa).

R15 serves as a coordination point for glutathione. C46 functions as the Nucleophile in the catalytic mechanism. Positions 79, 155, 158, 173, and 174 each coordinate glutathione. A GST C-terminal domain is found at 201-353; that stretch reads PAQLKTQIDD…LHYTRSHTRI (153 aa).

It belongs to the GST superfamily. Omega family. Homodimer.

The protein resides in the cytoplasm. The catalysed reaction is RX + glutathione = an S-substituted glutathione + a halide anion + H(+). The enzyme catalyses L-dehydroascorbate + 2 glutathione = glutathione disulfide + L-ascorbate. Its function is as follows. Active as '1-Cys' thiol transferase against beta-hydroxyethyl disulfide (HED), as dehydroascorbate reductase and as dimethylarsinic acid reductase, while not active against the standard GST substrate 1-chloro-2,4-dinitrobenzene (CDNB). May be involved in cell wall organization and biogenesis. In Saccharomyces cerevisiae (strain ATCC 204508 / S288c) (Baker's yeast), this protein is Glutathione S-transferase omega-like 2.